The following is a 142-amino-acid chain: VLSAADKNNVKGAWEKVGTHAGEYGAEALERMFLSFPTTKTYFPHFDLTHGSAQVKAHGQKVGAALTKAVGHLDDLPNALSDLSDLHAHKLRVDPVNFKLLSHCLLVTLSRHLPEQEFTPAVHASLDKFFSNVSTVLTSKYR.

The region spanning 1–142 is the Globin domain; that stretch reads VLSAADKNNV…VSTVLTSKYR (142 aa). A Phosphoserine modification is found at serine 3. 2 positions are modified to N6-succinyllysine: lysine 7 and lysine 11. The residue at position 16 (lysine 16) is an N6-acetyllysine; alternate. Lysine 16 is subject to N6-succinyllysine; alternate. Residue tyrosine 24 is modified to Phosphotyrosine. Serine 35 bears the Phosphoserine mark. The residue at position 40 (lysine 40) is an N6-succinyllysine. Histidine 58 contributes to the O2 binding site. Heme b is bound at residue histidine 87. A Phosphoserine modification is found at serine 102. Threonine 108 carries the phosphothreonine modification. Serine 125 is modified (phosphoserine). Phosphothreonine occurs at positions 135 and 138. The residue at position 139 (serine 139) is a Phosphoserine.

Belongs to the globin family. Heterotetramer of two alpha chains and two beta chains. Red blood cells.

In terms of biological role, involved in oxygen transport from the lung to the various peripheral tissues. Its function is as follows. Hemopressin acts as an antagonist peptide of the cannabinoid receptor CNR1. Hemopressin-binding efficiently blocks cannabinoid receptor CNR1 and subsequent signaling. The protein is Hemoglobin subunit alpha (HBA) of Procavia capensis habessinica (Abyssinian hyrax).